Reading from the N-terminus, the 396-residue chain is Agropine synthesis cyclase (396 aa).

This sequence belongs to the peptidase M24B family.

The sequence is that of Agropine synthesis cyclase (ags) from Rhizobium rhizogenes (Agrobacterium rhizogenes).